The following is a 153-amino-acid chain: UPF0266 membrane protein YPTB1631 (153 aa).

The next 3 membrane-spanning stretches (helical) occupy residues 6–26 (LVLV…EFIM), 45–65 (LDCM…VMAH), and 67–87 (APLT…ISYI).

Belongs to the UPF0266 family.

It localises to the cell inner membrane. The chain is UPF0266 membrane protein YPTB1631 from Yersinia pseudotuberculosis serotype I (strain IP32953).